A 321-amino-acid chain; its full sequence is Cytochrome f (321 aa).

Positions 1 to 38 (MKKNFYTISKTMSRSLKLILFSVFIGFSIFLIPQPTWA) are cleaved as a signal peptide. Heme contacts are provided by tyrosine 39, cysteine 59, cysteine 62, and histidine 63. The helical transmembrane segment at 288–308 (VIGMIIFFIGVGLSQIMLVLK) threads the bilayer.

It belongs to the cytochrome f family. As to quaternary structure, the 4 large subunits of the cytochrome b6-f complex are cytochrome b6, subunit IV (17 kDa polypeptide, PetD), cytochrome f and the Rieske protein, while the 4 small subunits are PetG, PetL, PetM and PetN. The complex functions as a dimer. Heme serves as cofactor.

It is found in the cellular thylakoid membrane. In terms of biological role, component of the cytochrome b6-f complex, which mediates electron transfer between photosystem II (PSII) and photosystem I (PSI), cyclic electron flow around PSI, and state transitions. In Prochlorococcus marinus (strain NATL1A), this protein is Cytochrome f.